We begin with the raw amino-acid sequence, 96 residues long: UPF0235 protein YE3436 (96 aa).

It belongs to the UPF0235 family.

The protein is UPF0235 protein YE3436 of Yersinia enterocolitica serotype O:8 / biotype 1B (strain NCTC 13174 / 8081).